A 346-amino-acid chain; its full sequence is Cyclin-dependent kinase 20 (346 aa).

Residues 4–288 form the Protein kinase domain; sequence YCILGRIGEG…ASKALLHQYF (285 aa). ATP-binding positions include 10 to 18 and Lys-33; that span reads IGEGAHGIV. Asp-127 (proton acceptor) is an active-site residue.

This sequence belongs to the protein kinase superfamily. CMGC Ser/Thr protein kinase family. CDC2/CDKX subfamily. As to quaternary structure, monomer. Interacts with TBC1D32. Interacts with MAK.

It is found in the nucleus. Its subcellular location is the cytoplasm. The protein localises to the cell projection. It localises to the cilium. It carries out the reaction L-seryl-[protein] + ATP = O-phospho-L-seryl-[protein] + ADP + H(+). The enzyme catalyses L-threonyl-[protein] + ATP = O-phospho-L-threonyl-[protein] + ADP + H(+). Functionally, required for high-level Shh responses in the developing neural tube. Together with TBC1D32, controls the structure of the primary cilium by coordinating assembly of the ciliary membrane and axoneme, allowing GLI2 to be properly activated in response to SHH signaling. Involved in cell growth. Activates CDK2, a kinase involved in the control of the cell cycle, by phosphorylating residue 'Thr-160'. The polypeptide is Cyclin-dependent kinase 20 (CDK20) (Homo sapiens (Human)).